The primary structure comprises 526 residues: Probable feruloyl esterase B-2 (526 aa).

A signal peptide spans 1–18 (MTKLSLLPLLALASAVLA). 2 disulfide bridges follow: Cys27-Cys74 and Cys62-Cys113. N-linked (GlcNAc...) asparagine glycosylation is found at Asn52, Asn97, and Asn137. Cystine bridges form between Cys186-Cys441, Cys255-Cys272, Cys281-Cys291, and Cys503-Cys525. The active-site Acyl-ester intermediate is the Ser187. A glycan (N-linked (GlcNAc...) asparagine) is linked at Asn233. Asp256, Asp259, Ala261, Asp263, and Ile265 together coordinate Ca(2+). N-linked (GlcNAc...) asparagine glycosylation is present at Asn311. Catalysis depends on charge relay system residues Asp400 and His440. An N-linked (GlcNAc...) asparagine glycan is attached at Asn516.

It belongs to the tannase family.

It is found in the secreted. It catalyses the reaction feruloyl-polysaccharide + H2O = ferulate + polysaccharide.. Its function is as follows. Involved in degradation of plant cell walls. Hydrolyzes the feruloyl-arabinose ester bond in arabinoxylans as well as the feruloyl-galactose and feruloyl-arabinose ester bonds in pectin. The sequence is that of Probable feruloyl esterase B-2 (faeB-2) from Neosartorya fischeri (strain ATCC 1020 / DSM 3700 / CBS 544.65 / FGSC A1164 / JCM 1740 / NRRL 181 / WB 181) (Aspergillus fischerianus).